The sequence spans 178 residues: Ribosome maturation factor RimM (178 aa).

Positions 100–178 (AADEYYWYQL…VMRVEWDADF (79 aa)) constitute a PRC barrel domain.

The protein belongs to the RimM family. As to quaternary structure, binds ribosomal protein uS19.

It localises to the cytoplasm. Functionally, an accessory protein needed during the final step in the assembly of 30S ribosomal subunit, possibly for assembly of the head region. Essential for efficient processing of 16S rRNA. May be needed both before and after RbfA during the maturation of 16S rRNA. It has affinity for free ribosomal 30S subunits but not for 70S ribosomes. The chain is Ribosome maturation factor RimM from Pseudomonas putida (strain W619).